The chain runs to 192 residues: Mediator of RNA polymerase II transcription subunit 29 (192 aa).

Positions 32–51 (MQQQSPQQMQPAPVPQQTQQ) are disordered.

Belongs to the Mediator complex subunit 29 family. In terms of assembly, component of the Mediator complex.

The protein resides in the nucleus. In terms of biological role, component of the Mediator complex, a coactivator involved in the regulated transcription of nearly all RNA polymerase II-dependent genes. Mediator functions as a bridge to convey information from gene-specific regulatory proteins to the basal RNA polymerase II transcription machinery. Mediator is recruited to promoters by direct interactions with regulatory proteins and serves as a scaffold for the assembly of a functional preinitiation complex with RNA polymerase II and the general transcription factors. This is Mediator of RNA polymerase II transcription subunit 29 (ix) from Bombyx mori (Silk moth).